We begin with the raw amino-acid sequence, 1056 residues long: Contactin-5 (1056 aa).

Residues 1–14 show a composition bias toward low complexity; that stretch reads MKADSSSSSSMSSR. Residues 1 to 33 are disordered; it reads MKADSSSSSSMSSRMRLRNSHGVGSSSQDWSPF. Polar residues predominate over residues 22-31; sequence GVGSSSQDWS. 6 consecutive Ig-like C2-type domains span residues 57–142, 154–240, 258–343, 348–432, 438–519, and 527–622; these read PVFI…IVLS, PFSG…RVLS, PKIE…GHLQ, PQWI…AELK, PMFN…AELT, and PMRV…AELL. Intrachain disulfides connect C81–C131, C175–C227, and C280–C327. N96 and N119 each carry an N-linked (GlcNAc...) asparagine glycan. N355 carries N-linked (GlcNAc...) asparagine glycosylation. Disulfide bonds link C369/C416, C459/C507, and C549/C606. N489 and N496 each carry an N-linked (GlcNAc...) asparagine glycan. Fibronectin type-III domains lie at 629-727, 732-829, 834-928, and 933-1023; these read PPGV…TKEA, APAN…SAEG, PPSE…TKKN, and PPGN…TSSG. The segment at 711-736 is disordered; sequence GTGDPSPPSRAVRTKEAVPSVAPANV. N-linked (GlcNAc...) asparagine glycosylation is found at N772, N887, N945, and N958. N1035 carries GPI-anchor amidated asparagine lipidation. A propeptide spans 1036 to 1056 (removed in mature form); the sequence is SPPGLAWTALFLSLMVPSFPL.

Belongs to the immunoglobulin superfamily. Contactin family.

The protein resides in the cell membrane. Its function is as follows. Contactins mediate cell surface interactions during nervous system development. The chain is Contactin-5 (cntn5) from Danio rerio (Zebrafish).